We begin with the raw amino-acid sequence, 1174 residues long: DNA-directed RNA polymerase subunit beta (1174 aa).

The protein belongs to the RNA polymerase beta chain family. The RNAP catalytic core consists of 2 alpha, 1 beta, 1 beta' and 1 omega subunit. When a sigma factor is associated with the core the holoenzyme is formed, which can initiate transcription.

The catalysed reaction is RNA(n) + a ribonucleoside 5'-triphosphate = RNA(n+1) + diphosphate. DNA-dependent RNA polymerase catalyzes the transcription of DNA into RNA using the four ribonucleoside triphosphates as substrates. In Mycolicibacterium gilvum (strain PYR-GCK) (Mycobacterium gilvum (strain PYR-GCK)), this protein is DNA-directed RNA polymerase subunit beta.